The chain runs to 146 residues: Large ribosomal subunit protein uL15 (146 aa).

Residues 1–56 form a disordered region; it reads MKLHELRAAEGANKASKRVGRGTGSGLGKTSGKGQNGQNSRSGGGVRPGFEGGQMP. Gly residues-rich tracts occupy residues 21–35 and 42–52; these read RGTG…GKGQ and SGGGVRPGFEG.

This sequence belongs to the universal ribosomal protein uL15 family. In terms of assembly, part of the 50S ribosomal subunit.

Binds to the 23S rRNA. This chain is Large ribosomal subunit protein uL15, found in Clostridium botulinum (strain Loch Maree / Type A3).